A 404-amino-acid polypeptide reads, in one-letter code: Glycosylated lysosomal membrane protein B (404 aa).

The signal sequence occupies residues M1 to G24. Residues Q25–S364 are Lumenal-facing. N85, N124, N128, N142, N152, N156, N163, N168, N178, N189, N205, N221, N266, N303, and N330 each carry an N-linked (GlcNAc...) asparagine glycan. A helical membrane pass occupies residues I365–G385. At T386 to N404 the chain is on the cytoplasmic side. Residues Y400 to N404 carry the Lysosomal targeting motif motif.

The protein belongs to the GLMP family. As to quaternary structure, interacts (via lumenal domain) with lysosomal protein MFSD1; the interaction starts while both proteins are still in the endoplasmic reticulum and is required for stabilization of MFSD1 in lysosomes but has no direct effect on its targeting to lysosomes or transporter activity.

It localises to the lysosome membrane. Required to protect lysosomal transporter MFSD1 from lysosomal proteolysis and for MFSD1 lysosomal localization. The sequence is that of Glycosylated lysosomal membrane protein B (glmp-b) from Xenopus laevis (African clawed frog).